The sequence spans 186 residues: Ribosome-recycling factor (186 aa).

The protein belongs to the RRF family.

It localises to the cytoplasm. Responsible for the release of ribosomes from messenger RNA at the termination of protein biosynthesis. May increase the efficiency of translation by recycling ribosomes from one round of translation to another. The sequence is that of Ribosome-recycling factor from Prosthecochloris aestuarii (strain DSM 271 / SK 413).